Here is a 1377-residue protein sequence, read N- to C-terminus: Zinc finger MYM-type protein 2 (1377 aa).

Residues Lys-48, Lys-88, Lys-98, and Lys-104 each participate in a glycyl lysine isopeptide (Lys-Gly) (interchain with G-Cter in SUMO2) cross-link. Polar residues-rich tracts occupy residues 85–115 (TSSK…SVSE) and 127–138 (TNQGQEKNSSNF). The disordered stretch occupies residues 85–177 (TSSKNEELQG…GMGNSGITTE (93 aa)). Residues 139-152 (IERRPPETKNRTND) are compositionally biased toward basic and acidic residues. A Glycyl lysine isopeptide (Lys-Gly) (interchain with G-Cter in SUMO2) cross-link involves residue Lys-147. The segment covering 153–164 (VDFSTSSFSRSK) has biased composition (polar residues). Position 159 is a phosphoserine (Ser-159). Glycyl lysine isopeptide (Lys-Gly) (interchain with G-Cter in SUMO2) cross-links involve residues Lys-253 and Lys-297. A disordered region spans residues 273 to 305 (NGESATHHNPDSWISQSASFPRNQKQPGVDSLS). A compositionally biased stretch (polar residues) spans 284–298 (SWISQSASFPRNQKQ). Phosphoserine is present on Ser-305. Residues Lys-312, Lys-325, Lys-348, and Lys-366 each participate in a glycyl lysine isopeptide (Lys-Gly) (interchain with G-Cter in SUMO2) cross-link. The MYM-type 1 zinc finger occupies 327 to 363 (VKVTCANCKKPLQKGQTAYQRKGSAHLFCSTTCLSSF). An MYM-type 2 zinc finger spans residues 369–409 (PKKLCVMCKKDITTMKGTIVAQVDSSESFQEFCSTSCLSLY). Residues Lys-417, Lys-441, Lys-491, Lys-503, Lys-513, Lys-529, and Lys-532 each participate in a glycyl lysine isopeptide (Lys-Gly) (interchain with G-Cter in SUMO2) cross-link. MYM-type zinc fingers lie at residues 421-456 (NKSR…FNRY) and 463-502 (IMNC…VSEY). Residues 533–570 (LTTCTGCRTQCRFFDMTQCIGPNGYMEPYCSTACMNSH) form an MYM-type 5 zinc finger. Residues Lys-576, Lys-603, Lys-649, Lys-658, Lys-688, Lys-700, and Lys-709 each participate in a glycyl lysine isopeptide (Lys-Gly) (interchain with G-Cter in SUMO2) cross-link. The segment at 636–671 (QLKCNYCKNSFCSKPEILEWENKVHQFCSKTCSDDY) adopts an MYM-type 6 zinc-finger fold. MYM-type zinc fingers lie at residues 723 to 758 (RCVT…CKKF) and 764 to 799 (KAAR…LLRF). Residues Lys-764, Lys-788, Lys-812, and Lys-829 each participate in a glycyl lysine isopeptide (Lys-Gly) (interchain with G-Cter in SUMO2) cross-link. Phosphoserine occurs at positions 838 and 958. Disordered regions lie at residues 983-1002 (LLKN…PYEP) and 1028-1064 (VFGE…SDNS). Basic residues predominate over residues 1039–1050 (PRSKKKGAKRKA). Ser-1064 carries the phosphoserine modification. Position 1376 is a phosphothreonine (Thr-1376).

As to quaternary structure, can form homodimers. May be a component of a BHC histone deacetylase complex that contains HDAC1, HDAC2, HMG20B/BRAF35, KDM1A, RCOR1/CoREST, PHF21A/BHC80, ZMYM2, ZNF217, ZMYM3, GSE1 and GTF2I. Interacts with FOXP1 and FOXP2.

It is found in the nucleus. Its function is as follows. Involved in the negative regulation of transcription. This is Zinc finger MYM-type protein 2 (ZMYM2) from Homo sapiens (Human).